We begin with the raw amino-acid sequence, 255 residues long: Accessory gland-specific peptide 26Aa (255 aa).

An N-terminal signal peptide occupies residues 1–18 (MNLILLCSQILLLLFTVA). Residues 86-110 (PINNSKSRKNSSTLPSQILTDKPNQ) form a disordered region. Over residues 87-110 (INNSKSRKNSSTLPSQILTDKPNQ) the composition is skewed to polar residues. 3 N-linked (GlcNAc...) asparagine glycosylation sites follow: Asn-88, Asn-95, and Asn-136. Disordered regions lie at residues 177 to 196 (NAQN…SKDI) and 235 to 255 (NNPA…PSTT). Residues 183–192 (KSTKSCKKRP) show a composition bias toward basic residues. Over residues 245–255 (KSPSEGNPSTT) the composition is skewed to polar residues.

In terms of processing, it undergoes several cleavages as it is secreted and it is further processed in the recipient female. As to expression, main cells of the accessory glands of males.

It is found in the secreted. It localises to the extracellular space. This protein is transferred from male to female's hemolymph during mating, affecting egglaying and behavior after mating. The chain is Accessory gland-specific peptide 26Aa (Acp26Aa) from Drosophila sechellia (Fruit fly).